Here is a 465-residue protein sequence, read N- to C-terminus: Trigger factor (465 aa).

In terms of domain architecture, PPIase FKBP-type spans 160–235 (ADQVTIQELG…VVEVSSKKLQ (76 aa)). The segment at 412-465 (QLSGEGQSTEAASPKATGTEAAGTEQSEPAQTETAQNDAGQTETAQSEGEQQSE) is disordered. The segment covering 435–465 (TEQSEPAQTETAQNDAGQTETAQSEGEQQSE) has biased composition (polar residues).

It belongs to the FKBP-type PPIase family. Tig subfamily. Binds to the 50S ribosomal subunit via interactions with ribosomal protein L23. Also interacts with 23S rRNA and proteins L24 and L29 when complexed with the ribosome.

The protein resides in the cytoplasm. The enzyme catalyses [protein]-peptidylproline (omega=180) = [protein]-peptidylproline (omega=0). Functionally, involved in protein export. Acts as a chaperone by maintaining the newly synthesized protein in an open conformation. Functions as a peptidyl-prolyl cis-trans isomerase. Probably changes conformation upon binding to the ribosome (maybe in particular due to interaction with L24), exposing a hydrophobic crevice that is probably important for its chaperone activity. This Deinococcus radiodurans (strain ATCC 13939 / DSM 20539 / JCM 16871 / CCUG 27074 / LMG 4051 / NBRC 15346 / NCIMB 9279 / VKM B-1422 / R1) protein is Trigger factor (tig).